Consider the following 206-residue polypeptide: Small ribosomal subunit protein uS4 (206 aa).

An S4 RNA-binding domain is found at 96–156 (QRLDNVVYRM…EKAKKQARIV (61 aa)).

This sequence belongs to the universal ribosomal protein uS4 family. As to quaternary structure, part of the 30S ribosomal subunit. Contacts protein S5. The interaction surface between S4 and S5 is involved in control of translational fidelity.

One of the primary rRNA binding proteins, it binds directly to 16S rRNA where it nucleates assembly of the body of the 30S subunit. Its function is as follows. With S5 and S12 plays an important role in translational accuracy. This Alteromonas mediterranea (strain DSM 17117 / CIP 110805 / LMG 28347 / Deep ecotype) protein is Small ribosomal subunit protein uS4.